A 122-amino-acid polypeptide reads, in one-letter code: Large ribosomal subunit protein uL14 (122 aa).

This sequence belongs to the universal ribosomal protein uL14 family. In terms of assembly, part of the 50S ribosomal subunit. Forms a cluster with proteins L3 and L19. In the 70S ribosome, L14 and L19 interact and together make contacts with the 16S rRNA in bridges B5 and B8.

Functionally, binds to 23S rRNA. Forms part of two intersubunit bridges in the 70S ribosome. The chain is Large ribosomal subunit protein uL14 from Neisseria meningitidis serogroup C (strain 053442).